A 249-amino-acid chain; its full sequence is MLIQAVTIFPEMFDSITRYGVTGRANRQGIWQFEAVNPRKFADNRLGYIDDRPFGGGPGMIMMAPPLHAAIEHAKAQSSQAAKVIYLSPQGKPLTHQKAVELAELPHLILLCGRYEGIDERLLQSSVDEEISIGDFVVSGGELPAMMLMDAVLRLVPGVLGDMQSAEQDSFSSGILDCPHYTKPLEFQGMAVPEVLRSGNHGLIAEWRLEQSLRRTLERRPDLLEKRSLIPKESRILNKILQEQREIQS.

S-adenosyl-L-methionine-binding positions include G113 and I133 to V138.

It belongs to the RNA methyltransferase TrmD family. Homodimer.

The protein resides in the cytoplasm. The catalysed reaction is guanosine(37) in tRNA + S-adenosyl-L-methionine = N(1)-methylguanosine(37) in tRNA + S-adenosyl-L-homocysteine + H(+). Its function is as follows. Specifically methylates guanosine-37 in various tRNAs. This chain is tRNA (guanine-N(1)-)-methyltransferase, found in Neisseria meningitidis serogroup C / serotype 2a (strain ATCC 700532 / DSM 15464 / FAM18).